Here is a 508-residue protein sequence, read N- to C-terminus: Cytochrome P450 monooxygenase pkfB (508 aa).

The chain crosses the membrane as a helical span at residues 9 to 29 (FSLGLSQILVCLALLYAAIHI). Residues Asn57 and Asn305 are each glycosylated (N-linked (GlcNAc...) asparagine). Cys450 provides a ligand contact to heme.

This sequence belongs to the cytochrome P450 family. It depends on heme as a cofactor.

It localises to the membrane. The protein operates within secondary metabolite biosynthesis. Its function is as follows. Cytochrome P450 monooxygenase; part of the gene cluster that mediates the biosynthesis of aspernidine A, a prenylated isoindolinone. The starting point of the biosynthesis of aspernidin A is the production of orsellinaldehyde by the non-reducing polyketide synthase pkfA. Hydroxylation, methylation of one of the phenol groups, and prenylation, presumably catalyzed by the prenyltransferase pkfE, would be needed to yield aspernidine D. Subsequently, the cytochrome P450 monooxygenase pkfB is responsible for hydroxylation of aspernidine D to yield aspernidine E. The dehydrogenase pkfF may be responsible for further oxidation of aspernidine E to form a dialdehyde intermediate which is further transformed in a series of steps, some of which are enzyme-mediated, to generate aspernidine A. The possibility that additional enzymes outside of the cluster are involved in aspernidine A biosynthesis cannot be excluded. This is Cytochrome P450 monooxygenase pkfB from Emericella nidulans (strain FGSC A4 / ATCC 38163 / CBS 112.46 / NRRL 194 / M139) (Aspergillus nidulans).